A 171-amino-acid polypeptide reads, in one-letter code: Small ribosomal subunit protein uS5 (171 aa).

The 64-residue stretch at 12 to 75 folds into the S5 DRBM domain; sequence LKEKLISVNR…EKARRNMIQV (64 aa).

The protein belongs to the universal ribosomal protein uS5 family. As to quaternary structure, part of the 30S ribosomal subunit. Contacts proteins S4 and S8.

Its function is as follows. With S4 and S12 plays an important role in translational accuracy. In terms of biological role, located at the back of the 30S subunit body where it stabilizes the conformation of the head with respect to the body. The chain is Small ribosomal subunit protein uS5 from Buchnera aphidicola subsp. Baizongia pistaciae (strain Bp).